A 245-amino-acid polypeptide reads, in one-letter code: Ribonuclease PH (245 aa).

Phosphate-binding positions include arginine 93 and 131–133 (GTR).

The protein belongs to the RNase PH family. In terms of assembly, homohexameric ring arranged as a trimer of dimers.

The catalysed reaction is tRNA(n+1) + phosphate = tRNA(n) + a ribonucleoside 5'-diphosphate. Functionally, phosphorolytic 3'-5' exoribonuclease that plays an important role in tRNA 3'-end maturation. Removes nucleotide residues following the 3'-CCA terminus of tRNAs; can also add nucleotides to the ends of RNA molecules by using nucleoside diphosphates as substrates, but this may not be physiologically important. Probably plays a role in initiation of 16S rRNA degradation (leading to ribosome degradation) during starvation. This chain is Ribonuclease PH, found in Corynebacterium glutamicum (strain R).